The primary structure comprises 207 residues: Large ribosomal subunit protein bL9 (207 aa).

Over residues 162–176 (QKKEEKAKDEVSATE) the composition is skewed to basic and acidic residues. The interval 162 to 207 (QKKEEKAKDEVSATEKDEELMLSSVTNDNDGDGAKEIVVEGTEESQ) is disordered.

It belongs to the bacterial ribosomal protein bL9 family.

Its function is as follows. Binds to the 23S rRNA. This chain is Large ribosomal subunit protein bL9, found in Ehrlichia ruminantium (strain Gardel).